The chain runs to 858 residues: Elongation factor 2 (858 aa).

In terms of domain architecture, tr-type G spans Ala17–Val362. Residues Ala26–Ser33, Asn158–Asp161, and Ser216–Leu218 each bind GTP. His715 carries the post-translational modification Diphthamide.

Belongs to the TRAFAC class translation factor GTPase superfamily. Classic translation factor GTPase family. EF-G/EF-2 subfamily. Binds to 80S ribosomes. Actively translating ribosomes show mutually exclusive binding of eIF5a (EIF5A or EIF5A2) and EEF2/eEF2. Interacts with serbp1; interaction sequesters eef2/eEF2 at the A-site of the ribosome, thereby blocking the interaction sites of the mRNA-tRNA complex, promoting ribosome stabilization and hibernation. Interacts with habp4; interaction takes place at the A-site of hibernating ribosomes and promotes ribosome stabilization.

The protein localises to the cytoplasm. The protein resides in the nucleus. It catalyses the reaction GTP + H2O = GDP + phosphate + H(+). Functionally, catalyzes the GTP-dependent ribosomal translocation step during translation elongation. During this step, the ribosome changes from the pre-translocational (PRE) to the post-translocational (POST) state as the newly formed A-site-bound peptidyl-tRNA and P-site-bound deacylated tRNA move to the P and E sites, respectively. Catalyzes the coordinated movement of the two tRNA molecules, the mRNA and conformational changes in the ribosome. The chain is Elongation factor 2 from Xenopus laevis (African clawed frog).